The sequence spans 154 residues: Ecotin-like protein 2 (154 aa).

The protein belongs to the protease inhibitor I11 (ecotin) family.

The protein is Ecotin-like protein 2 of Leishmania braziliensis.